The following is a 1254-amino-acid chain: DNA-directed RNA polymerase subunit beta (1254 aa).

This sequence belongs to the RNA polymerase beta chain family. In terms of assembly, the RNAP catalytic core consists of 2 alpha, 1 beta, 1 beta' and 1 omega subunit. When a sigma factor is associated with the core the holoenzyme is formed, which can initiate transcription.

The enzyme catalyses RNA(n) + a ribonucleoside 5'-triphosphate = RNA(n+1) + diphosphate. DNA-dependent RNA polymerase catalyzes the transcription of DNA into RNA using the four ribonucleoside triphosphates as substrates. This chain is DNA-directed RNA polymerase subunit beta, found in Protochlamydia amoebophila (strain UWE25).